The primary structure comprises 548 residues: Phenylalanine--tRNA ligase beta subunit (548 aa).

Residues 271–346 form the B5 domain; that stretch reads LSEAAAKLDP…ISIGYEALGP (76 aa). Aspartate 324, aspartate 330, glutamate 333, and aspartate 334 together coordinate Mg(2+).

Belongs to the phenylalanyl-tRNA synthetase beta subunit family. Type 2 subfamily. Tetramer of two alpha and two beta subunits. Requires Mg(2+) as cofactor.

It localises to the cytoplasm. It carries out the reaction tRNA(Phe) + L-phenylalanine + ATP = L-phenylalanyl-tRNA(Phe) + AMP + diphosphate + H(+). The sequence is that of Phenylalanine--tRNA ligase beta subunit from Aeropyrum pernix (strain ATCC 700893 / DSM 11879 / JCM 9820 / NBRC 100138 / K1).